The sequence spans 224 residues: Phosphoribosylformylglycinamidine synthase subunit PurQ (224 aa).

The Glutamine amidotransferase type-1 domain occupies 2 to 224; it reads KVTILQFPGT…IKMLQGFLRA (223 aa). The Nucleophile role is filled by Cys-86. Active-site residues include His-200 and Glu-202.

In terms of assembly, part of the FGAM synthase complex composed of 1 PurL, 1 PurQ and 2 PurS subunits.

The protein localises to the cytoplasm. It carries out the reaction N(2)-formyl-N(1)-(5-phospho-beta-D-ribosyl)glycinamide + L-glutamine + ATP + H2O = 2-formamido-N(1)-(5-O-phospho-beta-D-ribosyl)acetamidine + L-glutamate + ADP + phosphate + H(+). It catalyses the reaction L-glutamine + H2O = L-glutamate + NH4(+). It participates in purine metabolism; IMP biosynthesis via de novo pathway; 5-amino-1-(5-phospho-D-ribosyl)imidazole from N(2)-formyl-N(1)-(5-phospho-D-ribosyl)glycinamide: step 1/2. Functionally, part of the phosphoribosylformylglycinamidine synthase complex involved in the purines biosynthetic pathway. Catalyzes the ATP-dependent conversion of formylglycinamide ribonucleotide (FGAR) and glutamine to yield formylglycinamidine ribonucleotide (FGAM) and glutamate. The FGAM synthase complex is composed of three subunits. PurQ produces an ammonia molecule by converting glutamine to glutamate. PurL transfers the ammonia molecule to FGAR to form FGAM in an ATP-dependent manner. PurS interacts with PurQ and PurL and is thought to assist in the transfer of the ammonia molecule from PurQ to PurL. This is Phosphoribosylformylglycinamidine synthase subunit PurQ from Sulfurimonas denitrificans (strain ATCC 33889 / DSM 1251) (Thiomicrospira denitrificans (strain ATCC 33889 / DSM 1251)).